The primary structure comprises 154 residues: Ribosome maturation factor RimP (154 aa).

This sequence belongs to the RimP family.

Its subcellular location is the cytoplasm. Its function is as follows. Required for maturation of 30S ribosomal subunits. The protein is Ribosome maturation factor RimP of Haemophilus ducreyi (strain 35000HP / ATCC 700724).